Here is a 244-residue protein sequence, read N- to C-terminus: MEKTEESVGIRVYTATPPQKPSPSPPSRSPKPVLISSLPSLPSGAAAGGGRGRKRRMVAQGVQKTVSKTSMLVNFLPTGTLLMFEMVLPSIYRDGDCNGINTLMIHLLLLLCAMSCFFFHFTDSFKASDGKIYYGFVTPRGLAVFMKPPPPEFGGGDVIAEAEIPVTDDRYKLTVNDFVHAVMSVLVFMAIAFSDRRVTGCLFPGKEKEMDQVMESFPIMVGIVCSALFLVFPTTRYGVGCMTG.

The segment at 1–56 is disordered; the sequence is MEKTEESVGIRVYTATPPQKPSPSPPSRSPKPVLISSLPSLPSGAAAGGGRGRKRR. Residues 18–29 show a composition bias toward pro residues; that stretch reads PQKPSPSPPSRS. A compositionally biased stretch (low complexity) spans 30-45; the sequence is PKPVLISSLPSLPSGA. Helical transmembrane passes span 71 to 91, 99 to 119, 173 to 193, and 213 to 233; these read MLVNFLPTGTLLMFEMVLPSI, GINTLMIHLLLLLCAMSCFFF, LTVNDFVHAVMSVLVFMAIAF, and VMESFPIMVGIVCSALFLVFP.

It belongs to the plant DMP1 protein family. As to expression, restricted to flowers and pollen.

The protein localises to the endoplasmic reticulum membrane. It localises to the vacuole membrane. Involved in membrane remodeling. This is Protein DMP9 from Arabidopsis thaliana (Mouse-ear cress).